Here is a 1015-residue protein sequence, read N- to C-terminus: Probable beta-galactosidase B (1015 aa).

The N-terminal stretch at 1–20 (MAHIYRLLLLLLSNLWFSTA) is a signal peptide. N-linked (GlcNAc...) asparagine glycosylation occurs at asparagine 23. Tyrosine 90 is a binding site for substrate. N-linked (GlcNAc...) asparagine glycosylation is found at asparagine 99 and asparagine 100. Positions 135, 136, and 137 each coordinate substrate. A glycan (N-linked (GlcNAc...) asparagine) is linked at asparagine 172. Asparagine 195 provides a ligand contact to substrate. The active-site Proton donor is the glutamate 196. An N-linked (GlcNAc...) asparagine glycan is attached at asparagine 211. Substrate is bound at residue tyrosine 265. Cysteine 271 and cysteine 324 form a disulfide bridge. The active-site Nucleophile is glutamate 308. Tyrosine 373 serves as a coordination point for substrate. Residues asparagine 411, asparagine 456, asparagine 554, asparagine 679, asparagine 735, asparagine 775, and asparagine 821 are each glycosylated (N-linked (GlcNAc...) asparagine).

It belongs to the glycosyl hydrolase 35 family.

Its subcellular location is the secreted. The catalysed reaction is Hydrolysis of terminal non-reducing beta-D-galactose residues in beta-D-galactosides.. In terms of biological role, cleaves beta-linked terminal galactosyl residues from gangliosides, glycoproteins, and glycosaminoglycans. The protein is Probable beta-galactosidase B (lacB) of Aspergillus fumigatus (strain CBS 144.89 / FGSC A1163 / CEA10) (Neosartorya fumigata).